We begin with the raw amino-acid sequence, 182 residues long: MKLIDRRMRLTELLLRCSISVFALLALILVVTDTEVKLIFTIKKTAKYTDMKAVVFLVVANGIAAVYSLLQSVRCVVGTMKGRVLFSKPLAWAFFSGDQAMAYLNVAAIAATAESGVIAREGEEDLQWMRVCNMYGKFCNQMAIGVSSALLASIAMVFVSCISAFSLFRLYGATRDRRTTPW.

Over 1-12 (MKLIDRRMRLTE) the chain is Cytoplasmic. Residues 13 to 31 (LLLRCSISVFALLALILVV) traverse the membrane as a helical segment. The Extracellular portion of the chain corresponds to 32–52 (TDTEVKLIFTIKKTAKYTDMK). The helical transmembrane segment at 53–73 (AVVFLVVANGIAAVYSLLQSV) threads the bilayer. Topologically, residues 74 to 89 (RCVVGTMKGRVLFSKP) are cytoplasmic. The helical transmembrane segment at 90–110 (LAWAFFSGDQAMAYLNVAAIA) threads the bilayer. Residues 111 to 141 (ATAESGVIAREGEEDLQWMRVCNMYGKFCNQ) are Extracellular-facing. The helical transmembrane segment at 142-162 (MAIGVSSALLASIAMVFVSCI) threads the bilayer. Topologically, residues 163–182 (SAFSLFRLYGATRDRRTTPW) are cytoplasmic.

This sequence belongs to the Casparian strip membrane proteins (CASP) family. In terms of assembly, homodimer and heterodimers.

It is found in the cell membrane. The protein is CASP-like protein 2B1 of Arabidopsis lyrata subsp. lyrata (Lyre-leaved rock-cress).